We begin with the raw amino-acid sequence, 88 residues long: Putative regulatory protein DvMF_1139 (88 aa).

The protein belongs to the RemA family.

The sequence is that of Putative regulatory protein DvMF_1139 from Nitratidesulfovibrio vulgaris (strain DSM 19637 / Miyazaki F) (Desulfovibrio vulgaris).